The primary structure comprises 165 residues: SsrA-binding protein (165 aa).

The interval 141 to 165 (EDRRHAIAERETKREMDREISRRRR) is disordered.

It belongs to the SmpB family.

It is found in the cytoplasm. Required for rescue of stalled ribosomes mediated by trans-translation. Binds to transfer-messenger RNA (tmRNA), required for stable association of tmRNA with ribosomes. tmRNA and SmpB together mimic tRNA shape, replacing the anticodon stem-loop with SmpB. tmRNA is encoded by the ssrA gene; the 2 termini fold to resemble tRNA(Ala) and it encodes a 'tag peptide', a short internal open reading frame. During trans-translation Ala-aminoacylated tmRNA acts like a tRNA, entering the A-site of stalled ribosomes, displacing the stalled mRNA. The ribosome then switches to translate the ORF on the tmRNA; the nascent peptide is terminated with the 'tag peptide' encoded by the tmRNA and targeted for degradation. The ribosome is freed to recommence translation, which seems to be the essential function of trans-translation. The chain is SsrA-binding protein from Anaeromyxobacter sp. (strain Fw109-5).